We begin with the raw amino-acid sequence, 1377 residues long: DNA-directed RNA polymerase subunit beta' (1377 aa).

Zn(2+) is bound by residues cysteine 70, cysteine 72, cysteine 85, and cysteine 88. Residues aspartate 460, aspartate 462, and aspartate 464 each contribute to the Mg(2+) site. Residues cysteine 808, cysteine 882, cysteine 889, and cysteine 892 each contribute to the Zn(2+) site.

The protein belongs to the RNA polymerase beta' chain family. As to quaternary structure, the RNAP catalytic core consists of 2 alpha, 1 beta, 1 beta' and 1 omega subunit. When a sigma factor is associated with the core the holoenzyme is formed, which can initiate transcription. Mg(2+) serves as cofactor. It depends on Zn(2+) as a cofactor.

It carries out the reaction RNA(n) + a ribonucleoside 5'-triphosphate = RNA(n+1) + diphosphate. DNA-dependent RNA polymerase catalyzes the transcription of DNA into RNA using the four ribonucleoside triphosphates as substrates. The chain is DNA-directed RNA polymerase subunit beta' from Geotalea daltonii (strain DSM 22248 / JCM 15807 / FRC-32) (Geobacter daltonii).